A 452-amino-acid polypeptide reads, in one-letter code: Mitochondrial import inner membrane translocase subunit TIM50 (452 aa).

The N-terminal 23 residues, 1 to 23 (MSLSKLTQTCFSRHQAKTFIRLY), are a transit peptide targeting the mitochondrion. The Mitochondrial matrix segment spans residues 24–167 (SSDFKSLLGP…RRKRMERNTR (144 aa)). Disordered regions lie at residues 96–115 (IEAE…TSSA) and 130–153 (ESAA…GNAE). Low complexity predominate over residues 131–144 (SAASKSSSSSGGSS). Residues 168 to 188 (IGAYVLFGGSIIGFISFCFYY) form a helical membrane-spanning segment. The Mitochondrial intermembrane portion of the chain corresponds to 189 to 452 (GRAQRDEFGN…LFGSRRHVNA (264 aa)). The FCP1 homology domain maps to 243-387 (YLQPKYTIVI…VDLAELLKTI (145 aa)).

This sequence belongs to the TIM50 family.

The protein resides in the mitochondrion inner membrane. In terms of biological role, essential component of the TIM23 complex, a complex that mediates the translocation of transit peptide-containing proteins across the mitochondrial inner membrane. In Caenorhabditis elegans, this protein is Mitochondrial import inner membrane translocase subunit TIM50 (scpl-4).